Reading from the N-terminus, the 422-residue chain is Transcription termination factor Rho 1 (422 aa).

In terms of domain architecture, Rho RNA-BD spans 49-124 (AAIGGGVVEI…VKAHSINFTD (76 aa)). ATP-binding positions include 173-178 (GKGQRA), 185-190 (RAGKTI), and R216.

This sequence belongs to the Rho family. As to quaternary structure, homohexamer. The homohexamer assembles into an open ring structure.

Its function is as follows. Facilitates transcription termination by a mechanism that involves Rho binding to the nascent RNA, activation of Rho's RNA-dependent ATPase activity, and release of the mRNA from the DNA template. This chain is Transcription termination factor Rho 1, found in Ehrlichia chaffeensis (strain ATCC CRL-10679 / Arkansas).